The following is a 552-amino-acid chain: CTP synthase (552 aa).

Positions 1-273 (MSESKKNPET…LTPIARRFNM (273 aa)) are amidoligase domain. A CTP-binding site is contributed by serine 21. Serine 21 lines the UTP pocket. Residues 22-27 (SLGKGI) and aspartate 79 each bind ATP. Mg(2+)-binding residues include aspartate 79 and glutamate 147. CTP contacts are provided by residues 154 to 156 (DIE), 194 to 199 (KTKPTQ), and lysine 230. UTP-binding positions include 194–199 (KTKPTQ) and lysine 230. The region spanning 298–548 (TIAFVGKYLS…IQKSLELKKV (251 aa)) is the Glutamine amidotransferase type-1 domain. Residue glycine 359 participates in L-glutamine binding. The active-site Nucleophile; for glutamine hydrolysis is the cysteine 386. Residues 387–390 (LGMQ), glutamate 410, and arginine 478 contribute to the L-glutamine site. Active-site residues include histidine 521 and glutamate 523.

Belongs to the CTP synthase family. As to quaternary structure, homotetramer.

The enzyme catalyses UTP + L-glutamine + ATP + H2O = CTP + L-glutamate + ADP + phosphate + 2 H(+). It catalyses the reaction L-glutamine + H2O = L-glutamate + NH4(+). The catalysed reaction is UTP + NH4(+) + ATP = CTP + ADP + phosphate + 2 H(+). Its pathway is pyrimidine metabolism; CTP biosynthesis via de novo pathway; CTP from UDP: step 2/2. Allosterically activated by GTP, when glutamine is the substrate; GTP has no effect on the reaction when ammonia is the substrate. The allosteric effector GTP functions by stabilizing the protein conformation that binds the tetrahedral intermediate(s) formed during glutamine hydrolysis. Inhibited by the product CTP, via allosteric rather than competitive inhibition. In terms of biological role, catalyzes the ATP-dependent amination of UTP to CTP with either L-glutamine or ammonia as the source of nitrogen. Regulates intracellular CTP levels through interactions with the four ribonucleotide triphosphates. This is CTP synthase from Wolinella succinogenes (strain ATCC 29543 / DSM 1740 / CCUG 13145 / JCM 31913 / LMG 7466 / NCTC 11488 / FDC 602W) (Vibrio succinogenes).